The following is a 624-amino-acid chain: Phosphoenolpyruvate carboxykinase (ATP) 1 (624 aa).

A disordered region spans residues 1 to 22 (MASPNGGVTTYDYDDSDSAAPV). 322–329 (GLSGTGKT) contacts ATP.

It belongs to the phosphoenolpyruvate carboxykinase (ATP) family. As to quaternary structure, homohexamer. In terms of tissue distribution, green leaves but not in roots or etiolated shoots.

The protein resides in the cytoplasm. The catalysed reaction is oxaloacetate + ATP = phosphoenolpyruvate + ADP + CO2. It functions in the pathway carbohydrate biosynthesis; gluconeogenesis. The sequence is that of Phosphoenolpyruvate carboxykinase (ATP) 1 (PCK1) from Urochloa panicoides (Panic liverseed grass).